We begin with the raw amino-acid sequence, 298 residues long: UDP-N-acetylenolpyruvoylglucosamine reductase (298 aa).

In terms of domain architecture, FAD-binding PCMH-type spans 27–206 (VGGPAQRLYR…QQQIRRLLRQ (180 aa)). Residue arginine 171 is part of the active site. The Proton donor role is filled by serine 220. Residue glutamate 290 is part of the active site.

The protein belongs to the MurB family. The cofactor is FAD.

The protein resides in the cytoplasm. The catalysed reaction is UDP-N-acetyl-alpha-D-muramate + NADP(+) = UDP-N-acetyl-3-O-(1-carboxyvinyl)-alpha-D-glucosamine + NADPH + H(+). Its pathway is cell wall biogenesis; peptidoglycan biosynthesis. Cell wall formation. This is UDP-N-acetylenolpyruvoylglucosamine reductase from Nitrosococcus oceani (strain ATCC 19707 / BCRC 17464 / JCM 30415 / NCIMB 11848 / C-107).